The chain runs to 530 residues: Estrogen receptor beta (530 aa).

A modulating region spans residues 1-148; it reads MDIKNSPSSL…GPSSKRDAHF (148 aa). Ser61 is subject to Phosphoserine; alternate. A glycan (O-linked (GlcNAc) serine; alternate) is linked at Ser61. Residues Ser87 and Ser105 each carry the phosphoserine; by MAPK modification. NR C4-type zinc fingers lie at residues 149–169 and 185–209; these read CAVCSDYASGYHYGVWSCEGC and CPATNQCTIDKNRRKSCQACRLRKC. The nuclear receptor DNA-binding region spans 149 to 214; that stretch reads CAVCSDYASG…RLRKCYEVGM (66 aa). The region spanning 264–498 is the NR LBD domain; sequence SPEQLVLTLL…DLLLEMMNAH (235 aa). The disordered stretch occupies residues 507-530; the sequence is ITGSECSPAEDSKSTEGSQNPQSP. The segment covering 521–530 has biased composition (polar residues); the sequence is TEGSQNPQSP.

Belongs to the nuclear hormone receptor family. NR3 subfamily. In terms of assembly, binds DNA as a homodimer. Can form a heterodimer with ESR1. Interacts with NCOA1, NCOA3, NCOA5 and NCOA6 coactivators, leading to a strong increase of transcription of target genes. Interacts with UBE1C and AKAP13. Interacts with DNTTIP2. Interacts with CCDC62 in the presence of estradiol/E2; this interaction seems to enhance the transcription of target genes. Interacts with DNAAF4. Interacts with PRMT2. Interacts with CCAR2 (via N-terminus) in a ligand-independent manner. Interacts with RBM39, in the presence of estradiol (E2). Interacts with STUB1/CHIP. In terms of processing, phosphorylation at Ser-87 and Ser-105 recruits NCOA1.

It is found in the nucleus. Its function is as follows. Nuclear hormone receptor. Binds estrogens with an affinity similar to that of ESR1/ER-alpha, and activates expression of reporter genes containing estrogen response elements (ERE) in an estrogen-dependent manner. The polypeptide is Estrogen receptor beta (ESR2) (Callithrix jacchus (White-tufted-ear marmoset)).